A 1284-amino-acid polypeptide reads, in one-letter code: A-type inclusion protein A25 homolog (1284 aa).

The interval Lys-340–Glu-383 is disordered. Basic and acidic residues predominate over residues Glu-348–Lys-357. A run of 10 repeats spans residues Val-611–Glu-637, Asp-638–Gly-665, Asn-666–Gly-689, Asn-690–Asp-720, Thr-721–Asp-751, Met-752–Thr-780, Ser-781–Ser-811, Ala-812–Ser-842, Tyr-843–Ala-871, and Lys-872–Glu-912. A 10 X approximate tandem repeats region spans residues Val-611–Glu-912. The segment at Pro-1169–Ser-1234 is disordered. Positions Val-1180–Pro-1192 are enriched in low complexity. Residues Ser-1211–Ala-1221 are compositionally biased toward polar residues.

The protein belongs to the poxviridae A25 protein family. In terms of assembly, interacts (via N-terminus) with protein A26.

The protein resides in the virion. In terms of biological role, structural protein that forms a matrix surrounding the mature virion (MV) through interaction with protein A26. Presence of protein A25 in the virion structurally prevents direct virus-cell fusion mechanism. The sequence is that of A-type inclusion protein A25 homolog (ATI) from Apodemus sylvaticus (European woodmouse).